Here is a 436-residue protein sequence, read N- to C-terminus: Repulsive guidance molecule B (436 aa).

Positions M1–A48 are cleaved as a signal peptide. N-linked (GlcNAc...) asparagine glycosylation occurs at N123. Intrachain disulfides connect C142/C229 and C166/C315. N386 carries an N-linked (GlcNAc...) asparagine glycan. Residue C415 is the site of GPI-anchor amidated cysteine attachment. Positions G416–L436 are cleaved as a propeptide — removed in mature form.

This sequence belongs to the repulsive guidance molecule (RGM) family. Homooligomer. Interacts with DRGX. Interacts with BMP2 and BMP4. Interacts with the BMP type I receptors ACVR1, BMPR1A and BMPR1B and with the BMP type II receptor ACVR2B. The functional complex with its receptor NEO1/neogenin appears to be a heterotetramer with a 2:2 stoichiometry, RGM molecules acting as staples that bring two NEO1 receptors together without interacting themselves, this arrangement leads to activation of downstream signaling via RhoA. Post-translationally, GPI-anchored. In terms of processing, autocatalytically cleaved at low pH; the two chains remain linked via two disulfide bonds. In terms of tissue distribution, detected in neonatal and adult dorsal root ganglion sensory neurons, spinal cord, and brain (at protein level). Also expressed at high levels in retinal ganglion cells of developing mouse, extending to the optic nerve (at protein level). Expressed in testis, epididymis, ovary, uterus, and pituitary.

It is found in the cell membrane. Its subcellular location is the membrane raft. Functionally, member of the repulsive guidance molecule (RGM) family that contributes to the patterning of the developing nervous system. Acts as a bone morphogenetic protein (BMP) coreceptor that potentiates BMP signaling. Promotes neuronal adhesion. May inhibit neurite outgrowth. The sequence is that of Repulsive guidance molecule B from Mus musculus (Mouse).